A 419-amino-acid polypeptide reads, in one-letter code: 4-hydroxyphenylpyruvate dioxygenase (419 aa).

VOC domains lie at 41 to 187 (GYHH…FIQR) and 218 to 376 (AIDH…LFTK). Fe cation contacts are provided by H221, H304, and E387.

This sequence belongs to the 4HPPD family. Fe cation serves as cofactor.

The enzyme catalyses 3-(4-hydroxyphenyl)pyruvate + O2 = homogentisate + CO2. The protein operates within amino-acid degradation; L-phenylalanine degradation; acetoacetate and fumarate from L-phenylalanine: step 3/6. The polypeptide is 4-hydroxyphenylpyruvate dioxygenase (HPPD) (Zymoseptoria tritici (Speckled leaf blotch fungus)).